Consider the following 520-residue polypeptide: UDP-N-acetylmuramoyl-L-alanyl-D-glutamate--2,6-diaminopimelate ligase (520 aa).

Position 48 (L48) interacts with UDP-N-acetyl-alpha-D-muramoyl-L-alanyl-D-glutamate. ATP is bound at residue 134–140 (GTSGKTT). UDP-N-acetyl-alpha-D-muramoyl-L-alanyl-D-glutamate contacts are provided by residues 176–177 (TT), S203, and R211. The residue at position 243 (K243) is an N6-carboxylysine. Meso-2,6-diaminopimelate is bound by residues R405, 429–432 (DNPR), G483, and E487. Positions 429–432 (DNPR) match the Meso-diaminopimelate recognition motif motif.

Belongs to the MurCDEF family. MurE subfamily. It depends on Mg(2+) as a cofactor. In terms of processing, carboxylation is probably crucial for Mg(2+) binding and, consequently, for the gamma-phosphate positioning of ATP.

The protein localises to the cytoplasm. It catalyses the reaction UDP-N-acetyl-alpha-D-muramoyl-L-alanyl-D-glutamate + meso-2,6-diaminopimelate + ATP = UDP-N-acetyl-alpha-D-muramoyl-L-alanyl-gamma-D-glutamyl-meso-2,6-diaminopimelate + ADP + phosphate + H(+). The protein operates within cell wall biogenesis; peptidoglycan biosynthesis. Functionally, catalyzes the addition of meso-diaminopimelic acid to the nucleotide precursor UDP-N-acetylmuramoyl-L-alanyl-D-glutamate (UMAG) in the biosynthesis of bacterial cell-wall peptidoglycan. The chain is UDP-N-acetylmuramoyl-L-alanyl-D-glutamate--2,6-diaminopimelate ligase from Mycolicibacterium paratuberculosis (strain ATCC BAA-968 / K-10) (Mycobacterium paratuberculosis).